Here is a 138-residue protein sequence, read N- to C-terminus: Small ribosomal subunit protein uS11c (138 aa).

The tract at residues 1–22 is disordered; it reads MAKAIPKISSRRNGRIGSRKGA. Over residues 9-22 the composition is skewed to basic residues; it reads SSRRNGRIGSRKGA.

This sequence belongs to the universal ribosomal protein uS11 family. Part of the 30S ribosomal subunit.

The protein localises to the plastid. The protein resides in the chloroplast. This Nicotiana tomentosiformis (Tobacco) protein is Small ribosomal subunit protein uS11c.